The chain runs to 345 residues: Adenylosuccinate synthetase (345 aa).

Residues 18 to 24 (GDEGKGK) and 48 to 50 (GHT) each bind GTP. The Proton acceptor role is filled by Asp19. Mg(2+)-binding residues include Asp19 and Gly48. IMP is bound by residues 19–22 (DEGK), 46–49 (NAGH), Thr133, Arg147, Gln185, Thr200, and Arg262. Residue His49 is the Proton donor of the active site. 258-264 (TVTGRRR) contributes to the substrate binding site. Residues Arg264, 290-292 (GLD), and 330-332 (STG) each bind GTP.

This sequence belongs to the adenylosuccinate synthetase family. Homodimer. Mg(2+) serves as cofactor.

The protein localises to the cytoplasm. The enzyme catalyses IMP + L-aspartate + GTP = N(6)-(1,2-dicarboxyethyl)-AMP + GDP + phosphate + 2 H(+). It functions in the pathway purine metabolism; AMP biosynthesis via de novo pathway; AMP from IMP: step 1/2. Functionally, plays an important role in the de novo pathway of purine nucleotide biosynthesis. Catalyzes the first committed step in the biosynthesis of AMP from IMP. The protein is Adenylosuccinate synthetase of Methanocaldococcus jannaschii (strain ATCC 43067 / DSM 2661 / JAL-1 / JCM 10045 / NBRC 100440) (Methanococcus jannaschii).